We begin with the raw amino-acid sequence, 235 residues long: Probable transcriptional regulatory protein Ccur92_05350 (235 aa).

Belongs to the TACO1 family.

It is found in the cytoplasm. The protein is Probable transcriptional regulatory protein Ccur92_05350 of Campylobacter curvus (strain 525.92).